The following is a 351-amino-acid chain: Phospho-N-acetylmuramoyl-pentapeptide-transferase (351 aa).

Transmembrane regions (helical) follow at residues 17–37, 61–83, 88–105, 130–150, 158–178, 190–210, 230–250, 254–274, 279–299, and 328–348; these read TAYATIFAFLLALIFGPFIIS, MGIPTMGGVLIFFCVLVSLFFWI, IYFLIVLFVMVSFACLGF, ILFSFISVVMLYYFGGEHVSI, SLKLDLGILYIPFGMFVLISA, GLAIGLSIVVIGALIIIAYLT, LVIFLGALLGGSFGFLWFNAY, IMMGDTGSLSIGAVLGMVALI, ILFAILAGVFVVETLSVIIQV, and QVVIRFWIIGLIFAILALSTI.

The protein belongs to the glycosyltransferase 4 family. MraY subfamily. Mg(2+) is required as a cofactor.

The protein resides in the cell inner membrane. It catalyses the reaction UDP-N-acetyl-alpha-D-muramoyl-L-alanyl-gamma-D-glutamyl-meso-2,6-diaminopimeloyl-D-alanyl-D-alanine + di-trans,octa-cis-undecaprenyl phosphate = di-trans,octa-cis-undecaprenyl diphospho-N-acetyl-alpha-D-muramoyl-L-alanyl-D-glutamyl-meso-2,6-diaminopimeloyl-D-alanyl-D-alanine + UMP. The protein operates within cell wall biogenesis; peptidoglycan biosynthesis. In terms of biological role, catalyzes the initial step of the lipid cycle reactions in the biosynthesis of the cell wall peptidoglycan: transfers peptidoglycan precursor phospho-MurNAc-pentapeptide from UDP-MurNAc-pentapeptide onto the lipid carrier undecaprenyl phosphate, yielding undecaprenyl-pyrophosphoryl-MurNAc-pentapeptide, known as lipid I. The chain is Phospho-N-acetylmuramoyl-pentapeptide-transferase from Borrelia duttonii (strain Ly).